The chain runs to 711 residues: Polyribonucleotide nucleotidyltransferase (711 aa).

Residues aspartate 486 and aspartate 492 each contribute to the Mg(2+) site. Positions 553–612 constitute a KH domain; it reads PRIHTIKINPDKIKDVIGKGGSVIRALTEETGTTIEIEDDGTVKIAATDGDKAQHAIRRI. An S1 motif domain is found at 622 to 690; it reads GRIYNGKVTR…RQGRVRLSIK (69 aa). A disordered region spans residues 691-711; it reads EATEQTPSAAAPEAPVAEQGE. The segment covering 699–711 has biased composition (low complexity); the sequence is AAAPEAPVAEQGE.

It belongs to the polyribonucleotide nucleotidyltransferase family. In terms of assembly, component of the RNA degradosome, which is a multiprotein complex involved in RNA processing and mRNA degradation. Mg(2+) is required as a cofactor.

Its subcellular location is the cytoplasm. The enzyme catalyses RNA(n+1) + phosphate = RNA(n) + a ribonucleoside 5'-diphosphate. In terms of biological role, involved in mRNA degradation. Catalyzes the phosphorolysis of single-stranded polyribonucleotides processively in the 3'- to 5'-direction. The protein is Polyribonucleotide nucleotidyltransferase of Klebsiella pneumoniae (strain 342).